The sequence spans 354 residues: Rhodopsin (354 aa).

Over Met-1–Ala-36 the chain is Extracellular. Residues Asn-2 and Asn-15 are each glycosylated (N-linked (GlcNAc...) asparagine). Residues Tyr-37–Val-61 traverse the membrane as a helical segment. Residues Thr-62–Asn-73 lie on the Cytoplasmic side of the membrane. Residues Tyr-74 to Tyr-96 traverse the membrane as a helical segment. At Thr-97–Cys-110 the chain is on the extracellular side. The cysteines at positions 110 and 187 are disulfide-linked. Residues Asn-111 to Ile-133 form a helical membrane-spanning segment. Positions Glu-134–Trp-136 match the 'Ionic lock' involved in activated form stabilization motif. The Cytoplasmic portion of the chain corresponds to Glu-134–His-152. Residues Ala-153–Val-173 traverse the membrane as a helical segment. At Gly-174–Ser-202 the chain is on the extracellular side. Asn-200 is a glycosylation site (N-linked (GlcNAc...) asparagine). Residues Phe-203–Gly-224 form a helical membrane-spanning segment. Residues Arg-225–Arg-252 lie on the Cytoplasmic side of the membrane. Residues Met-253 to Tyr-274 traverse the membrane as a helical segment. At Ile-275–Val-286 the chain is on the extracellular side. A helical membrane pass occupies residues Phe-287–Cys-308. At Lys-296 the chain carries N6-(retinylidene)lysine. Topologically, residues Met-309 to Ala-354 are cytoplasmic. Residues Gly-333–Ala-354 form a disordered region. A compositionally biased stretch (low complexity) spans Ala-334–Ala-354.

Belongs to the G-protein coupled receptor 1 family. Opsin subfamily. In terms of processing, phosphorylated on some or all of the serine and threonine residues present in the C-terminal region. Post-translationally, contains one covalently linked retinal chromophore. Retinal rod photoreceptor cells, predominantly in the outer segments (at protein level). Retinal rod photoreceptor cells.

It localises to the membrane. Its subcellular location is the cell projection. The protein localises to the cilium. The protein resides in the photoreceptor outer segment. In terms of biological role, photoreceptor required for image-forming vision at low light intensity. While most salt water fish species use retinal as chromophore, most freshwater fish use 3-dehydroretinal, or a mixture of retinal and 3-dehydroretinal. Light-induced isomerization of 11-cis to all-trans retinal triggers a conformational change that activates signaling via G-proteins. Subsequent receptor phosphorylation mediates displacement of the bound G-protein alpha subunit by arrestin and terminates signaling. In Danio rerio (Zebrafish), this protein is Rhodopsin (rho).